Reading from the N-terminus, the 595-residue chain is Sucrose transport protein SUT4 (595 aa).

Topologically, residues 1–61 (MDSAAGGGGL…PAARTTTTRK (61 aa)) are cytoplasmic. The tract at residues 29–55 (SLNGGTPRGGSPKDPDATHQQGPPAAR) is disordered. The helical transmembrane segment at 62–82 (LVLACMVAAGVQFGWALQLSL) threads the bilayer. Residues 83–97 (LTPYIQTLGIDHAMA) lie on the Extracellular side of the membrane. Residues 98-118 (SFIWLCGPITGFVVQPCVGVW) form a helical membrane-spanning segment. Residues 119-130 (SDKCRSKYGRRR) are Cytoplasmic-facing. Residues 131-151 (PFILAGCLMICFAVTLIGFSA) form a helical membrane-spanning segment. Over 152–173 (DLGYILGDTTEHCSTYKGSRFR) the chain is Extracellular. Residues 174–194 (AAIIFVLGFWMLDLANNTVQG) traverse the membrane as a helical segment. At 195–213 (PARALLADLSGPDQCNSAN) the chain is on the cytoplasmic side. The helical transmembrane segment at 214–234 (AIFCTWMAVGNVLGFSSGASG) threads the bilayer. Residues 235–256 (NWHKWFPFLMTRACCEACSNLK) lie on the Extracellular side of the membrane. Residues 257-277 (AAFLVAVVFLLFCMSVTLYFA) traverse the membrane as a helical segment. Residues 278-365 (EEIPLEPTDA…LTSMRHLPPG (88 aa)) lie on the Cytoplasmic side of the membrane. The tract at residues 291-340 (SDSAPLLNGSRDDNNASNEPRNGALPNGHTDGSNVPANSNAEDSNSNREN) is disordered. The segment covering 320-334 (TDGSNVPANSNAEDS) has biased composition (polar residues). A helical membrane pass occupies residues 366-386 (MYSVLLVMALTWLSWFPFFLF). The Extracellular segment spans residues 387–417 (DTDWMGREVYHGDPNGNLSERKAYDNGVREG). N403 is a glycosylation site (N-linked (GlcNAc...) asparagine). Residues 418–438 (AFGLLLNSVVLGIGSFLVDPL) form a helical membrane-spanning segment. Topologically, residues 439–447 (CRLMGARLV) are cytoplasmic. A helical membrane pass occupies residues 448 to 468 (WAISNFTVFICMLATAILSWI). Residues 469–491 (SFDLYSSKLHHIIGANKTVKNSA) lie on the Extracellular side of the membrane. N-linked (GlcNAc...) asparagine glycosylation is present at N484. The chain crosses the membrane as a helical span at residues 492 to 512 (LIVFSLLGLPLSITYSVPFSV). The Cytoplasmic segment spans residues 513 to 525 (TAELTAGTGGGQG). The chain crosses the membrane as a helical span at residues 526 to 546 (LATGVLNLAIVVPQIVVSLGA). Residues 547-556 (GPWDALFGGG) are Extracellular-facing. The chain crosses the membrane as a helical span at residues 557–577 (NVPAFALASVFSLGAGVLAVL). Residues 578–595 (KLPKLPNSYRSAGFHGFG) lie on the Cytoplasmic side of the membrane.

This sequence belongs to the glycoside-pentoside-hexuronide (GPH) cation symporter transporter (TC 2.A.2.4) family. Homodimer.

The protein localises to the cell membrane. The protein operates within glycan biosynthesis; sucrose metabolism. Functionally, responsible for the transport of sucrose into the cell, with the concomitant uptake of protons (symport system). May also transport other glucosides. This chain is Sucrose transport protein SUT4 (SUT4), found in Oryza sativa subsp. indica (Rice).